Reading from the N-terminus, the 141-residue chain is MRHYEIIFLVHPDQSEQVGGMVERYTKLIEEDGGKIHRLEDWGRRQLAYAINNVHKAHYVMLNVECTGKALAELEDNFRYNDAVIRNLVIRREEAITGQSEMLKAEENRSERRERRDRPEHADSADGDDSDNSDASDNADE.

The segment at 97-141 (TGQSEMLKAEENRSERRERRDRPEHADSADGDDSDNSDASDNADE) is disordered. A compositionally biased stretch (basic and acidic residues) spans 103 to 124 (LKAEENRSERRERRDRPEHADS). The segment covering 125 to 141 (ADGDDSDNSDASDNADE) has biased composition (acidic residues).

Belongs to the bacterial ribosomal protein bS6 family.

Functionally, binds together with bS18 to 16S ribosomal RNA. This chain is Small ribosomal subunit protein bS6, found in Pseudomonas fluorescens (strain ATCC BAA-477 / NRRL B-23932 / Pf-5).